The sequence spans 173 residues: Co-chaperone protein HscB homolog (173 aa).

Positions Ser5–Leu77 constitute a J domain.

Belongs to the HscB family. Interacts with HscA and stimulates its ATPase activity.

Its function is as follows. Co-chaperone involved in the maturation of iron-sulfur cluster-containing proteins. Seems to help targeting proteins to be folded toward HscA. This Azotobacter vinelandii (strain DJ / ATCC BAA-1303) protein is Co-chaperone protein HscB homolog.